Consider the following 346-residue polypeptide: Ribosomal RNA small subunit methyltransferase H (346 aa).

S-adenosyl-L-methionine contacts are provided by residues 46–48 (GGY), aspartate 63, phenylalanine 90, aspartate 113, and glutamine 120. The disordered stretch occupies residues 270–346 (GGSAGSRHMP…LPETNELARS (77 aa)).

Belongs to the methyltransferase superfamily. RsmH family.

It localises to the cytoplasm. It carries out the reaction cytidine(1402) in 16S rRNA + S-adenosyl-L-methionine = N(4)-methylcytidine(1402) in 16S rRNA + S-adenosyl-L-homocysteine + H(+). Functionally, specifically methylates the N4 position of cytidine in position 1402 (C1402) of 16S rRNA. The protein is Ribosomal RNA small subunit methyltransferase H of Brucella abortus (strain S19).